Consider the following 225-residue polypeptide: Testis-expressed protein 30 (225 aa).

The sequence is that of Testis-expressed protein 30 (Tex30) from Mus musculus (Mouse).